The chain runs to 563 residues: Putative cysteine ligase BshC (563 aa).

A coiled-coil region spans residues 493-518 (KEKTYRAGRRKHDELLQQLDKAELNL).

This sequence belongs to the BshC family.

This Chlorobaculum tepidum (strain ATCC 49652 / DSM 12025 / NBRC 103806 / TLS) (Chlorobium tepidum) protein is Putative cysteine ligase BshC.